The following is a 292-amino-acid chain: MAAPFKTLVEDYPRYLKSFELFLERSSEHQCMQDFIHNTLPDILASIGGGRSVFNVMGVGSGAGDIDLEMLAQLHLKHPHVKVDNEVVEPSNDMLYKYKARVSTSPDLAYINFTWNKMTASEFEKQWQEKTPEKKMDFIHMIQMLYYVKDPNATVSFFRSLLEKDGKLLIILVSGESGWGKLWTTFRKQLCYTEMSQCVTIGEIKSFLDSEGVPYRKYVLLSQMDITECFTEGDQEGELLLDFLTEVKEFSKNAPERLKKEVLDVLRHPDCSKEVDGRIIFNNNLEVLVIEP.

Glutamate 28 provides a ligand contact to substrate. S-adenosyl-L-methionine contacts are provided by glycine 60, glutamate 89, and isoleucine 142. Asparagine 283 contributes to the substrate binding site.

This sequence belongs to the class I-like SAM-binding methyltransferase superfamily. HNMT family. In terms of assembly, monomer.

Its subcellular location is the cytoplasm. It carries out the reaction histamine + S-adenosyl-L-methionine = N(tau)-methylhistamine + S-adenosyl-L-homocysteine + H(+). Its function is as follows. Inactivates histamine by N-methylation. Plays an important role in degrading histamine and in regulating the airway response to histamine. The sequence is that of Histamine N-methyltransferase (hnmt) from Danio rerio (Zebrafish).